A 1567-amino-acid polypeptide reads, in one-letter code: Myosin-2A (1567 aa).

The Myosin N-terminal SH3-like domain maps to 4–57 (EVGTRCWYPSKEQGWIGAEVTKNDLKDGTYFMELTLEDNEVVNVETKDLTNEKD). One can recognise a Myosin motor domain in the interval 70 to 786 (ESTEDLTTLS…MLAYFEKLRS (717 aa)). 164–171 (GESGAGKT) contributes to the ATP binding site. The interval 446-526 (FIGVLDIYGF…LGILSLLDEE (81 aa)) is actin-binding. Positions 619–640 (EEAKKNAASQDQKQLKKPTPIR) are disordered. IQ domains are found at residues 789 to 818 (MNSAIVLIQKHIRSKYYRKQYMLMKASLSL), 812 to 836 (MKASLSLLGAYSKGTVIRQRVEYEL), 837 to 859 (EQHAATLIQTMYRGYSKRSYISG), 860 to 884 (VISSIVKLQSRIREELEQREMQSKY), 885 to 907 (ESNAAISIQSRIRAFVPRKAYES), and 908 to 937 (KRRDTIVVQSLIRRRIAQRDFKKLKADAKS). Positions 947-1091 (KLENKVIQLT…LAHLQTSIAL (145 aa)) form a coiled coil. The segment at 1092 to 1567 (GTVTTNTNIV…VAQQVTVPDA (476 aa)) is non alpha-helical, tail domain. Residues 1230–1505 (AQVLTTIQKV…LKYVADIVKK (276 aa)) form the Dilute domain.

The protein belongs to the TRAFAC class myosin-kinesin ATPase superfamily. Myosin family. Homodimer. Interacts with calmodulin (CMD1) and the myosin light chain MLC1 through its IQ repeats.

Myosin heavy chain that is required for the cell cycle-regulated transport of various organelles and proteins for their segregation. Functions by binding with its tail domain to receptor proteins on organelles and exerting force with its N-terminal motor domain against actin filaments, thereby transporting its cargo along polarized actin cables. The chain is Myosin-2A (MYO2A) from Naumovozyma castellii (Yeast).